Reading from the N-terminus, the 172-residue chain is ATP synthase subunit b (172 aa).

The helical transmembrane segment at L11 to F30 threads the bilayer.

Belongs to the ATPase B chain family. In terms of assembly, F-type ATPases have 2 components, F(1) - the catalytic core - and F(0) - the membrane proton channel. F(1) has five subunits: alpha(3), beta(3), gamma(1), delta(1), epsilon(1). F(0) has three main subunits: a(1), b(2) and c(10-14). The alpha and beta chains form an alternating ring which encloses part of the gamma chain. F(1) is attached to F(0) by a central stalk formed by the gamma and epsilon chains, while a peripheral stalk is formed by the delta and b chains.

It is found in the cell inner membrane. F(1)F(0) ATP synthase produces ATP from ADP in the presence of a proton or sodium gradient. F-type ATPases consist of two structural domains, F(1) containing the extramembraneous catalytic core and F(0) containing the membrane proton channel, linked together by a central stalk and a peripheral stalk. During catalysis, ATP synthesis in the catalytic domain of F(1) is coupled via a rotary mechanism of the central stalk subunits to proton translocation. Functionally, component of the F(0) channel, it forms part of the peripheral stalk, linking F(1) to F(0). This is ATP synthase subunit b from Methylacidiphilum infernorum (isolate V4) (Methylokorus infernorum (strain V4)).